Here is a 368-residue protein sequence, read N- to C-terminus: Nucleotide pyrophosphatase/phosphodiesterase (368 aa).

This sequence belongs to the metallophosphoesterase superfamily. In terms of assembly, monomer and homomer. Post-translationally, glycosylated.

It localises to the plastid. It is found in the chloroplast. Functionally, hydrolyzes pyrophosphate, phosphodiester and phosphosulfate linkages of nucleotide-sugars, sulfonucleotides and nucleoside di and triphosphates. Highest activity observed with the substrates ADP-glucose and adenosine 5'-phosphosulfate. The chain is Nucleotide pyrophosphatase/phosphodiesterase from Hordeum vulgare (Barley).